A 94-amino-acid chain; its full sequence is Putative pterin-4-alpha-carbinolamine dehydratase (94 aa).

It belongs to the pterin-4-alpha-carbinolamine dehydratase family.

It catalyses the reaction (4aS,6R)-4a-hydroxy-L-erythro-5,6,7,8-tetrahydrobiopterin = (6R)-L-erythro-6,7-dihydrobiopterin + H2O. The polypeptide is Putative pterin-4-alpha-carbinolamine dehydratase (Mycolicibacterium smegmatis (strain ATCC 700084 / mc(2)155) (Mycobacterium smegmatis)).